The sequence spans 311 residues: ADP-L-glycero-D-manno-heptose-6-epimerase (311 aa).

NADP(+)-binding positions include 10 to 11 (FI), 31 to 32 (DD), K38, K53, 75 to 79 (EGACS), and N92. Y139 acts as the Proton acceptor in catalysis. K143 contacts NADP(+). N174 serves as a coordination point for substrate. Residues V175 and K183 each coordinate NADP(+). K183 functions as the Proton acceptor in the catalytic mechanism. Residues S185, H192, 206–209 (FEGE), R212, and Y275 contribute to the substrate site.

The protein belongs to the NAD(P)-dependent epimerase/dehydratase family. HldD subfamily. In terms of assembly, homopentamer. Requires NADP(+) as cofactor.

It catalyses the reaction ADP-D-glycero-beta-D-manno-heptose = ADP-L-glycero-beta-D-manno-heptose. The protein operates within nucleotide-sugar biosynthesis; ADP-L-glycero-beta-D-manno-heptose biosynthesis; ADP-L-glycero-beta-D-manno-heptose from D-glycero-beta-D-manno-heptose 7-phosphate: step 4/4. In terms of biological role, catalyzes the interconversion between ADP-D-glycero-beta-D-manno-heptose and ADP-L-glycero-beta-D-manno-heptose via an epimerization at carbon 6 of the heptose. This Psychromonas ingrahamii (strain DSM 17664 / CCUG 51855 / 37) protein is ADP-L-glycero-D-manno-heptose-6-epimerase.